We begin with the raw amino-acid sequence, 243 residues long: Adenosylcobinamide-GDP ribazoletransferase (243 aa).

5 helical membrane passes run 31 to 48, 61 to 81, 109 to 129, 134 to 154, and 188 to 208; these read LLFY…LWVL, AALL…DGLA, IAVV…VALI, GFAL…LFLC, and LLLG…LFFW.

This sequence belongs to the CobS family. The cofactor is Mg(2+).

It localises to the cell inner membrane. It catalyses the reaction alpha-ribazole + adenosylcob(III)inamide-GDP = adenosylcob(III)alamin + GMP + H(+). It carries out the reaction alpha-ribazole 5'-phosphate + adenosylcob(III)inamide-GDP = adenosylcob(III)alamin 5'-phosphate + GMP + H(+). The protein operates within cofactor biosynthesis; adenosylcobalamin biosynthesis; adenosylcobalamin from cob(II)yrinate a,c-diamide: step 7/7. Its function is as follows. Joins adenosylcobinamide-GDP and alpha-ribazole to generate adenosylcobalamin (Ado-cobalamin). Also synthesizes adenosylcobalamin 5'-phosphate from adenosylcobinamide-GDP and alpha-ribazole 5'-phosphate. This is Adenosylcobinamide-GDP ribazoletransferase from Pseudomonas fluorescens (strain ATCC BAA-477 / NRRL B-23932 / Pf-5).